The following is a 442-amino-acid chain: Probable glycine dehydrogenase (decarboxylating) subunit 1 (442 aa).

This sequence belongs to the GcvP family. N-terminal subunit subfamily. As to quaternary structure, the glycine cleavage system is composed of four proteins: P, T, L and H. In this organism, the P 'protein' is a heterodimer of two subunits.

The enzyme catalyses N(6)-[(R)-lipoyl]-L-lysyl-[glycine-cleavage complex H protein] + glycine + H(+) = N(6)-[(R)-S(8)-aminomethyldihydrolipoyl]-L-lysyl-[glycine-cleavage complex H protein] + CO2. Functionally, the glycine cleavage system catalyzes the degradation of glycine. The P protein binds the alpha-amino group of glycine through its pyridoxal phosphate cofactor; CO(2) is released and the remaining methylamine moiety is then transferred to the lipoamide cofactor of the H protein. This Geotalea daltonii (strain DSM 22248 / JCM 15807 / FRC-32) (Geobacter daltonii) protein is Probable glycine dehydrogenase (decarboxylating) subunit 1.